The sequence spans 174 residues: MSAKGWNASKPSERILLTLRRFKRSAASETKPATQAKRMEPQACRKRRTLRISMNHTSQQKDQTMSAMYLKIIRDVENAILRLWRRSGPLERTSNQDLEYDVIMFMITAVKRLRESKMLTVSWYLQALSVIEDSREEKEALMIALRILAKIIPKEMLHLTGDILSALNRTEQLM.

The protein belongs to the morbillivirus protein C family.

The chain is Protein C (P/V/C) from Canine distemper virus (strain Onderstepoort) (CDV).